The chain runs to 61 residues: Small ribosomal subunit protein uS14 (61 aa).

Positions 24, 27, 40, and 43 each coordinate Zn(2+).

Belongs to the universal ribosomal protein uS14 family. Zinc-binding uS14 subfamily. Part of the 30S ribosomal subunit. Contacts proteins S3 and S10. Requires Zn(2+) as cofactor.

Functionally, binds 16S rRNA, required for the assembly of 30S particles and may also be responsible for determining the conformation of the 16S rRNA at the A site. The sequence is that of Small ribosomal subunit protein uS14 from Thermobifida fusca (strain YX).